We begin with the raw amino-acid sequence, 290 residues long: Eukaryotic translation initiation factor 3 subunit F-2 (290 aa).

The MPN domain maps to 12 to 150 (VRLQPLVLFQ…TRLYCGVTMG (139 aa)).

It belongs to the eIF-3 subunit F family. As to quaternary structure, component of the eukaryotic translation initiation factor 3 (eIF-3) complex. The eIF-3 complex interacts with pix.

Its subcellular location is the cytoplasm. Its function is as follows. Component of the eukaryotic translation initiation factor 3 (eIF-3) complex, which is involved in protein synthesis of a specialized repertoire of mRNAs and, together with other initiation factors, stimulates binding of mRNA and methionyl-tRNAi to the 40S ribosome. The eIF-3 complex specifically targets and initiates translation of a subset of mRNAs involved in cell proliferation. This is Eukaryotic translation initiation factor 3 subunit F-2 from Drosophila virilis (Fruit fly).